A 279-amino-acid chain; its full sequence is Shikimate dehydrogenase (NADP(+)) (279 aa).

Shikimate-binding positions include 20–22 (SRS) and T67. The active-site Proton acceptor is K71. D83 contributes to the NADP(+) binding site. 2 residues coordinate shikimate: N92 and D108. NADP(+) is bound by residues 134-138 (GAGGA) and L223. Y225 is a shikimate binding site. G246 serves as a coordination point for NADP(+).

The protein belongs to the shikimate dehydrogenase family. In terms of assembly, homodimer.

The enzyme catalyses shikimate + NADP(+) = 3-dehydroshikimate + NADPH + H(+). It participates in metabolic intermediate biosynthesis; chorismate biosynthesis; chorismate from D-erythrose 4-phosphate and phosphoenolpyruvate: step 4/7. In terms of biological role, involved in the biosynthesis of the chorismate, which leads to the biosynthesis of aromatic amino acids. Catalyzes the reversible NADPH linked reduction of 3-dehydroshikimate (DHSA) to yield shikimate (SA). In Cereibacter sphaeroides (strain KD131 / KCTC 12085) (Rhodobacter sphaeroides), this protein is Shikimate dehydrogenase (NADP(+)).